A 345-amino-acid chain; its full sequence is Protein D345L (345 aa).

Belongs to the asfivirus D345L family. In terms of assembly, interacts with IKKA/CHUK and IKBKB.

It is found in the host cytoplasm. In terms of biological role, plays a role in the negative regulation of host NF-kappa-B signaling pathway. Mechanistically, recruits host IKKA/CHUK and IKBKB to suppress their kinase activity towards NFKBIA. The polypeptide is Protein D345L (African swine fever virus (strain Badajoz 1971 Vero-adapted) (Ba71V)).